Consider the following 427-residue polypeptide: MLDVKLLRNNFEEVKQKLQNRGEDLGEFEKFGELDKRRRTLIVETEALKSQRNEVSQEIAKLKREKQDADAKIEEMRVVGDRIKTLDIELREIDEKLDTILMSIPNIPHESTPVGESEDDNVEIRKWGEVREFDFEPKAHWDLGTDLDILDFENAAKVTGSRFVFYKKLGARLERALINFMMDLHSNEHGYEEMLPPYMVNRASMTGTGQLPKFEEDAFLIEAEDYFLIPTAEVPVTNYHREDILKAEDLPRKYTAFSACFRSEAGSAGRDTRGLIRQHQFNKVELVQFVKPEDSYAALEKLTGCAEEVLRRLELPYRVLSMCTADLGFTAAKKYDLEVWIPSYDSYREISSCSNFESFQARRANIRFRREPGSKPEYVHTLNGSGLALGRTVAAILENYQEADGSVLIPKVLQGYMGGIEKIELPK.

An L-serine-binding site is contributed by 231–233; the sequence is TAE. 262-264 is a binding site for ATP; the sequence is RSE. Glu-285 provides a ligand contact to L-serine. 349-352 lines the ATP pocket; that stretch reads EISS. Ser-385 contacts L-serine.

The protein belongs to the class-II aminoacyl-tRNA synthetase family. Type-1 seryl-tRNA synthetase subfamily. In terms of assembly, homodimer. The tRNA molecule binds across the dimer.

The protein resides in the cytoplasm. It catalyses the reaction tRNA(Ser) + L-serine + ATP = L-seryl-tRNA(Ser) + AMP + diphosphate + H(+). The enzyme catalyses tRNA(Sec) + L-serine + ATP = L-seryl-tRNA(Sec) + AMP + diphosphate + H(+). It participates in aminoacyl-tRNA biosynthesis; selenocysteinyl-tRNA(Sec) biosynthesis; L-seryl-tRNA(Sec) from L-serine and tRNA(Sec): step 1/1. Catalyzes the attachment of serine to tRNA(Ser). Is also able to aminoacylate tRNA(Sec) with serine, to form the misacylated tRNA L-seryl-tRNA(Sec), which will be further converted into selenocysteinyl-tRNA(Sec). The polypeptide is Serine--tRNA ligase (Listeria innocua serovar 6a (strain ATCC BAA-680 / CLIP 11262)).